The following is a 782-amino-acid chain: DnaJ homolog subfamily C member 16 (782 aa).

The first 25 residues, 1-25 (MEVRKLSISWQFLIVLVLILQILSA), serve as a signal peptide directing secretion. Over 26–535 (LDFDPYKVLG…DSIFHNNWRE (510 aa)) the chain is Cytoplasmic. The J domain occupies 29–93 (DPYKVLGVSR…EKRSNYDQYG (65 aa)). The 129-residue stretch at 119 to 247 (FYFDESFFHF…LRQFVESLLP (129 aa)) folds into the Thioredoxin domain. Residues 536-556 (MMPLLSLIFSALFILFGTVIV) traverse the membrane as a helical; Anchor for type IV membrane protein segment. Topologically, residues 557–782 (QAFSDSSDER…FYIPSWPELD (226 aa)) are extracellular. The disordered stretch occupies residues 562–593 (SSDERESSPPDKEEAQEKTGKTEPSFTKENSS). Over residues 563 to 582 (SDERESSPPDKEEAQEKTGK) the composition is skewed to basic and acidic residues. Positions 583–593 (TEPSFTKENSS) are enriched in polar residues. A glycan (N-linked (GlcNAc...) asparagine) is linked at N631.

It is found in the endoplasmic reticulum membrane. Its function is as follows. Plays an important role in regulating the size of autophagosomes during the formation process. This chain is DnaJ homolog subfamily C member 16 (DNAJC16), found in Pongo abelii (Sumatran orangutan).